Here is a 467-residue protein sequence, read N- to C-terminus: Ammonium transporter Rh type C (467 aa).

At 1 to 9 (MAWNTNLRW) the chain is on the cytoplasmic side. The chain crosses the membrane as a helical span at residues 10–30 (RLPLLCLVLEVAMVVLFGLFV). At 31–61 (RYSPDADSSWSNEKRKGNITSDLENEFYYRY) the chain is on the extracellular side. The N-linked (GlcNAc...) asparagine glycan is linked to Asn48. The helical transmembrane segment at 62-82 (PSFQDVHVMVFLGFGFLMTFL) threads the bilayer. At 83–86 (QRYG) the chain is on the cytoplasmic side. A helical transmembrane segment spans residues 87–107 (YCALGFNFLLAALGVQWALLM). At 108 to 131 (QGWFQYTKDRLILLGIKNLIDADS) the chain is on the extracellular side. 2 helical membrane passes run 132–152 (CVAS…PVQM) and 153–173 (LLMT…LLHV). Residues 174 to 179 (LEVKDA) lie on the Extracellular side of the membrane. The helical transmembrane segment at 180–200 (GGSITIHIFGAYFGLTVTWIL) threads the bilayer. The Cytoplasmic segment spans residues 201 to 219 (YRHNLDHSRERQSSVYHSN). A helical membrane pass occupies residues 220–240 (LFAMIGTLFLWIYWPSFNSAM). At 241-251 (SNYGDAQHRAA) the chain is on the extracellular side. Residues 252–272 (INTYCSLAASVLTSVAMSSVL) traverse the membrane as a helical segment. Topologically, residues 273 to 282 (HKKGKLDMVH) are cytoplasmic. A helical membrane pass occupies residues 283–303 (IQNATLAGGVGVGTAAEMMLM). Position 304 (Pro304) is a topological domain, extracellular. The chain crosses the membrane as a helical span at residues 305–325 (YGALIVGFICGAVSTLGFVYL). Over 326–343 (TPFLESRLRIQDTCGIHN) the chain is Cytoplasmic. The helical transmembrane segment at 344–364 (LHGIPGLIGAIVGAVTAAYAS) threads the bilayer. At 365–391 (PDGDRGFVYPFGFHNEKDEKVQGRFQA) the chain is on the extracellular side. A helical membrane pass occupies residues 392–412 (FGLLLTLAIAMVGGTIMGLIL). Residues 413-467 (KLPFWGQAMDEDCFDDSIYWEMHEEKSSSPEDHTHKPSVPTEPVEQPTSSATLAP) lie on the Cytoplasmic side of the membrane. A compositionally biased stretch (basic and acidic residues) spans 436 to 447 (EEKSSSPEDHTH). The disordered stretch occupies residues 436–467 (EEKSSSPEDHTHKPSVPTEPVEQPTSSATLAP). The segment covering 458–467 (QPTSSATLAP) has biased composition (polar residues).

It belongs to the ammonium transporter (TC 2.A.49) family. Rh subfamily. Homotrimer. In terms of processing, N-glycosylated.

It is found in the cell membrane. The protein resides in the apical cell membrane. The catalysed reaction is NH4(+)(in) = NH4(+)(out). It carries out the reaction methylamine(out) = methylamine(in). It catalyses the reaction CO2(out) = CO2(in). Functionally, ammonium transporter involved in the maintenance of acid-base homeostasis. Transports ammonium and its related derivative methylammonium across the plasma membrane of epithelial cells likely contributing to renal transepithelial ammonia transport and ammonia metabolism. Postulated to primarily mediate an electroneutral bidirectional transport of NH3 ammonia species according to a mechanism that implies interaction of an NH4(+) ion with acidic residues of the pore entry followed by dissociation of NH4(+) into NH3 and H(+). As a result NH3 transits through the central pore and is protonated on the extracellular side reforming NH4(+). May act as a CO2 channel providing for renal acid secretion. This is Ammonium transporter Rh type C (RHCG) from Oryctolagus cuniculus (Rabbit).